Here is a 61-residue protein sequence, read N- to C-terminus: Large ribosomal subunit protein uL30 (61 aa).

This sequence belongs to the universal ribosomal protein uL30 family. As to quaternary structure, part of the 50S ribosomal subunit.

This Teredinibacter turnerae (strain ATCC 39867 / T7901) protein is Large ribosomal subunit protein uL30.